The primary structure comprises 302 residues: Deoxyhypusine hydroxylase (302 aa).

Met1 carries the N-acetylmethionine modification. HEAT-like PBS-type repeat units lie at residues 54–80 (LKHE…VLQD), 87–113 (VRHE…YSTD), 175–201 (ERYR…GLKC), 206–232 (FRHE…TLAR), and 239–265 (VRHE…YITD). Fe cation is bound by residues His56, His89, and Glu90. Residues His208, His241, and Glu242 each coordinate Fe cation.

The protein belongs to the deoxyhypusine hydroxylase family. Fe(2+) serves as cofactor.

It catalyses the reaction [eIF5A protein]-deoxyhypusine + AH2 + O2 = [eIF5A protein]-hypusine + A + H2O. It functions in the pathway protein modification; eIF5A hypusination. In terms of biological role, catalyzes the hydroxylation of the N(6)-(4-aminobutyl)-L-lysine intermediate produced by deoxyhypusine synthase/DHPS on a critical lysine of the eukaryotic translation initiation factor 5A/eIF-5A. This is the second step of the post-translational modification of that lysine into an unusual amino acid residue named hypusine. Hypusination is unique to mature eIF-5A factor and is essential for its function. The protein is Deoxyhypusine hydroxylase (Dohh) of Rattus norvegicus (Rat).